The primary structure comprises 596 residues: Protein kinase C iota type (596 aa).

Positions 1-12 (MPTQRDSSTMSH) are enriched in polar residues. The segment at 1-23 (MPTQRDSSTMSHTVAGGGSGDHS) is disordered. The residue at position 2 (proline 2) is an N-acetylproline. The required for interaction with RAB2 stretch occupies residues 2 to 28 (PTQRDSSTMSHTVAGGGSGDHSHQVRV). The interval 2–253 (PTQRDSSTMS…KASSSLGLQD (252 aa)) is regulatory domain. A Phosphothreonine modification is found at threonine 3. Residues serine 7 and serine 8 each carry the phosphoserine modification. Threonine 9 bears the Phosphothreonine mark. In terms of domain architecture, PB1 spans 25 to 108 (QVRVKAYYRG…SELLIHVFPC (84 aa)). Residues 72–91 (DEEGDPCTVSSQLELEEAFR) form an interaction with PARD6A region. The Pseudosubstrate signature appears at 125-134 (YRRGARRWRK). Residues 140–190 (GHTFQAKRFNRRAHCAICTDRIWGLGRQGYKCINCKLLVHKKCHKLVTIEC) form a Phorbol-ester/DAG-type zinc finger. Residues 221-246 (PSSHESLDQVGEEKEAMNTRESGKAS) are disordered. Basic and acidic residues predominate over residues 225–243 (ESLDQVGEEKEAMNTRESG). The Protein kinase domain occupies 254–522 (FDLLRVIGRG…FADIQGHPFF (269 aa)). 260–268 (IGRGSYAKV) contacts ATP. Phosphotyrosine; by SRC occurs at positions 265 and 280. Lysine 283 is an ATP binding site. Position 334 is a phosphotyrosine; by SRC (tyrosine 334). The Proton acceptor role is filled by aspartate 378. Threonine 412 is subject to Phosphothreonine; by PDPK1. The AGC-kinase C-terminal domain maps to 523–594 (RNVDWDMMEQ…INPLLMSAEE (72 aa)). At threonine 564 the chain carries Phosphothreonine.

This sequence belongs to the protein kinase superfamily. AGC Ser/Thr protein kinase family. PKC subfamily. In terms of assembly, forms a complex with SQSTM1 and MP2K5. Interacts directly with SQSTM1. Interacts with IKBKB. Interacts with PARD6A, PARD6B and PARD6G. Part of a quaternary complex containing aPKC, PARD3, a PARD6 protein (PARD6A, PARD6B or PARD6G) and a GTPase protein (CDC42 or RAC1). Part of a complex with LLGL1 and PARD6B. Interacts with ADAP1/CENTA1. Interaction with SMG1, through the ZN-finger domain, activates the kinase activity. Interacts with CDK7. Forms a complex with RAB2A and GAPDH involved in recruitment onto the membrane of vesicular tubular clusters (VTCs). Interacts with ECT2 ('Thr-359' phosphorylated form). Interacts with VAMP2. Interacts with WDFY2 (via WD repeats 1-3). In terms of processing, phosphorylation at Thr-412 in the activation loop is not mandatory for activation. Upon neuronal growth factor (NGF) stimulation, phosphorylated by SRC at Tyr-265, Tyr-280 and Tyr-334. Phosphorylation at Tyr-265 facilitates binding to KPNB1/importin-beta regulating entry of PRKCI into the nucleus. Phosphorylation on Tyr-334 is important for NF-kappa-B stimulation. Phosphorylated at Thr-564 during the initial phase of long term potentiation.

The protein localises to the cytoplasm. It is found in the membrane. It localises to the endosome. Its subcellular location is the nucleus. The catalysed reaction is L-seryl-[protein] + ATP = O-phospho-L-seryl-[protein] + ADP + H(+). It catalyses the reaction L-threonyl-[protein] + ATP = O-phospho-L-threonyl-[protein] + ADP + H(+). Its activity is regulated as follows. Atypical PKCs (PRKCI and PRKCZ) exhibit an elevated basal enzymatic activity (that may be due to the interaction with SMG1 or SQSTM1) and are not regulated by diacylglycerol, phosphatidylserine, phorbol esters or calcium ions. Two specific sites, Thr-412 (activation loop of the kinase domain) and Thr-564 (turn motif), need to be phosphorylated for its full activation. Might also be a target for novel lipid activators that are elevated during nutrient-stimulated insulin secretion. In terms of biological role, calcium- and diacylglycerol-independent serine/ threonine-protein kinase that plays a general protective role against apoptotic stimuli, is involved in NF-kappa-B activation, cell survival, differentiation and polarity, and contributes to the regulation of microtubule dynamics in the early secretory pathway. Is necessary for BCR-ABL oncogene-mediated resistance to apoptotic drug in leukemia cells, protecting leukemia cells against drug-induced apoptosis. In cultured neurons, prevents amyloid beta protein-induced apoptosis by interrupting cell death process at a very early step. In glioblastoma cells, may function downstream of phosphatidylinositol 3-kinase (PI(3)K) and PDPK1 in the promotion of cell survival by phosphorylating and inhibiting the pro-apoptotic factor BAD. Can form a protein complex in non-small cell lung cancer (NSCLC) cells with PARD6A and ECT2 and regulate ECT2 oncogenic activity by phosphorylation, which in turn promotes transformed growth and invasion. In response to nerve growth factor (NGF), acts downstream of SRC to phosphorylate and activate IRAK1, allowing the subsequent activation of NF-kappa-B and neuronal cell survival. Functions in the organization of the apical domain in epithelial cells by phosphorylating EZR. This step is crucial for activation and normal distribution of EZR at the early stages of intestinal epithelial cell differentiation. Forms a protein complex with LLGL1 and PARD6B independently of PARD3 to regulate epithelial cell polarity. Plays a role in microtubule dynamics in the early secretory pathway through interaction with RAB2A and GAPDH and recruitment to vesicular tubular clusters (VTCs). In human coronary artery endothelial cells (HCAEC), is activated by saturated fatty acids and mediates lipid-induced apoptosis. Involved in early synaptic long term potentiation phase in CA1 hippocampal cells and short term memory formation. This chain is Protein kinase C iota type (PRKCI), found in Pongo abelii (Sumatran orangutan).